A 160-amino-acid polypeptide reads, in one-letter code: UPF0178 protein PA14_69280 (160 aa).

This sequence belongs to the UPF0178 family.

This is UPF0178 protein PA14_69280 from Pseudomonas aeruginosa (strain UCBPP-PA14).